Consider the following 101-residue polypeptide: MSQIKDRVEKLIQTNPVMMFSKSFCPYCKKAKATLKELNVEPGICELDEDSEGRAIQDYLKEKTSQNTVPNIFIKGQHVGGCDDLLAAKDNGSLSKMIAAL.

Positions 5 to 101 constitute a Glutaredoxin domain; that stretch reads KDRVEKLIQT…GSLSKMIAAL (97 aa). Cysteines 25 and 28 form a disulfide.

The protein belongs to the glutaredoxin family.

The protein localises to the cytoplasm. It is found in the cytosol. Its function is as follows. Multifunctional enzyme with glutathione-dependent oxidoreductase, glutathione peroxidase and glutathione S-transferase (GST) activity. The disulfide bond functions as an electron carrier in the glutathione-dependent synthesis of deoxyribonucleotides by the enzyme ribonucleotide reductase. In addition, it is also involved in reducing cytosolic protein- and non-protein-disulfides in a coupled system with glutathione reductase. May play a role in protection against oxidative stress caused by superoxide in vivo by regulating the redox state of the protein sulfhydryl groups. This Rhizophagus irregularis (strain DAOM 181602 / DAOM 197198 / MUCL 43194) (Arbuscular mycorrhizal fungus) protein is Glutaredoxin-1.